A 200-amino-acid chain; its full sequence is Ciliary microtubule inner protein 2C (200 aa).

It belongs to the CIMIP2 family. In terms of assembly, microtubule inner protein component of sperm flagellar doublet microtubules.

The protein localises to the cytoplasm. It is found in the cytoskeleton. The protein resides in the cilium axoneme. It localises to the flagellum axoneme. Its function is as follows. Microtubule inner protein (MIP) part of the dynein-decorated doublet microtubules (DMTs) in cilia axoneme, which is required for motile cilia beating. Binds to the intra-tubulin interfaces. This Mus musculus (Mouse) protein is Ciliary microtubule inner protein 2C (Cimip2c).